Consider the following 212-residue polypeptide: Golgi SNAP receptor complex member 2 homolog memb-1 (212 aa).

The Cytoplasmic segment spans residues 1 to 189; that stretch reads MEAQYQSTNF…QVIDRRVRED (189 aa). A helical; Anchor for type IV membrane protein transmembrane segment spans residues 190–210; sequence WIFVIGCIVCCIFMYAFYRFW. Topologically, residues 211–212 are vesicular; it reads RG.

Belongs to the GOSR2 family. As to quaternary structure, part of a unique SNARE complex.

Its subcellular location is the golgi apparatus. It localises to the cis-Golgi network membrane. It is found in the golgi apparatus membrane. The protein localises to the endoplasmic reticulum membrane. Involved in transport of proteins from the cis/medial-Golgi to the trans-Golgi network. The chain is Golgi SNAP receptor complex member 2 homolog memb-1 from Caenorhabditis briggsae.